A 376-amino-acid chain; its full sequence is MVSERSSNQSHPLDYYMNNQSTDHHTIAEDLEIQLTENDKQRIKSISEQIEPLNHEGLLKYGANLQQKMSHFSHQILDDVQSKDMGPVGETLSQLMGKLKSVNPNDINPEKQSRLKRLFKRTKASINEVFSRMQSVSSQIDRITIQLEKHKDQLTKDVEFLDQLYQQNKTYFDNVTLYILAAQKKKKEILTETIPQLREKAHQTGNQMDIQATADMEQFVDRLDKRIYDLQLSRQIAIQTAPQIRMIQNVNQALAEKIQSSILTSIPLWKNQMAIALTLMRQRNAVSAQRSVTDTTNELLTQNASMLKENAIETAAENERGIVDIETLKTTQNDIIETIEQTLQIQEDGRQKRQVAEKELNELEKDLKQHLLAMRK.

The protein belongs to the TelA family.

The protein is TelA-like protein SE_1089 of Staphylococcus epidermidis (strain ATCC 12228 / FDA PCI 1200).